The chain runs to 339 residues: Heat-inducible transcription repressor HrcA (339 aa).

Belongs to the HrcA family.

Functionally, negative regulator of class I heat shock genes (grpE-dnaK-dnaJ and groELS operons). Prevents heat-shock induction of these operons. In Methylobacillus flagellatus (strain ATCC 51484 / DSM 6875 / VKM B-1610 / KT), this protein is Heat-inducible transcription repressor HrcA.